The primary structure comprises 134 residues: Small ribosomal subunit protein uS12 (134 aa).

D89 bears the 3-methylthioaspartic acid mark. Residues 103–134 (DTAGVKDRKQGRSKYGAKRPKPGEAAATGKKK) form a disordered region. Positions 113–122 (GRSKYGAKRP) are enriched in basic residues.

It belongs to the universal ribosomal protein uS12 family. As to quaternary structure, part of the 30S ribosomal subunit. Contacts proteins S8 and S17. May interact with IF1 in the 30S initiation complex.

With S4 and S5 plays an important role in translational accuracy. In terms of biological role, interacts with and stabilizes bases of the 16S rRNA that are involved in tRNA selection in the A site and with the mRNA backbone. Located at the interface of the 30S and 50S subunits, it traverses the body of the 30S subunit contacting proteins on the other side and probably holding the rRNA structure together. The combined cluster of proteins S8, S12 and S17 appears to hold together the shoulder and platform of the 30S subunit. This chain is Small ribosomal subunit protein uS12, found in Thermosynechococcus vestitus (strain NIES-2133 / IAM M-273 / BP-1).